We begin with the raw amino-acid sequence, 460 residues long: Trigger factor (460 aa).

One can recognise a PPIase FKBP-type domain in the interval 166-245; sequence DDFLTIDITA…VKAVKERELP (80 aa). The tract at residues 434-460 is disordered; that stretch reads AAEEAAAGEANEEADVVASDDPAAVKF. Positions 449–460 are enriched in low complexity; the sequence is VVASDDPAAVKF.

This sequence belongs to the FKBP-type PPIase family. Tig subfamily.

It is found in the cytoplasm. The enzyme catalyses [protein]-peptidylproline (omega=180) = [protein]-peptidylproline (omega=0). Functionally, involved in protein export. Acts as a chaperone by maintaining the newly synthesized protein in an open conformation. Functions as a peptidyl-prolyl cis-trans isomerase. The protein is Trigger factor of Paenarthrobacter aurescens (strain TC1).